The following is a 342-amino-acid chain: NAD kinase (342 aa).

Asp-66 (proton acceptor) is an active-site residue. NAD(+) is bound by residues 66 to 67 (DG), Arg-71, 141 to 142 (ND), Lys-152, Asp-171, 182 to 187 (TAYAFS), and Ala-206.

The protein belongs to the NAD kinase family. A divalent metal cation serves as cofactor.

It localises to the cytoplasm. The enzyme catalyses NAD(+) + ATP = ADP + NADP(+) + H(+). Its function is as follows. Involved in the regulation of the intracellular balance of NAD and NADP, and is a key enzyme in the biosynthesis of NADP. Catalyzes specifically the phosphorylation on 2'-hydroxyl of the adenosine moiety of NAD to yield NADP. The protein is NAD kinase of Bifidobacterium longum (strain NCC 2705).